The primary structure comprises 285 residues: HTH-type transcriptional regulator HexR (285 aa).

The 77-residue stretch at 2 to 78 (KNLLEQIQSR…IQLAQSLASG (77 aa)) folds into the HTH rpiR-type domain. Residues 38–57 (IAALAQAAAVSEPTVNRFCR) constitute a DNA-binding region (H-T-H motif). In terms of domain architecture, SIS spans 122–261 (AVDLLIQARQ…ATGVTLRRGV (140 aa)).

Functionally, involved in regulation of glucose metabolism. Transcriptional repressor of the gap-1 gene and of the edd-glk-gltR-2 and zwf-pgl-eda operons. Acts by binding directly to an inverted pseudopalindromic sequence in the promoter region. This is HTH-type transcriptional regulator HexR from Pseudomonas aeruginosa (strain ATCC 15692 / DSM 22644 / CIP 104116 / JCM 14847 / LMG 12228 / 1C / PRS 101 / PAO1).